Reading from the N-terminus, the 715-residue chain is Fatty acid oxidation complex subunit alpha (715 aa).

The interval 1-190 is enoyl-CoA hydratase/isomerase; it reads MIYEGKAITV…KVGAVDAVVA (190 aa). Position 297 (Asp297) interacts with substrate. Residues 312–715 form a 3-hydroxyacyl-CoA dehydrogenase region; that stretch reads HDVKQAAVLG…MAKNGQRFFN (404 aa). NAD(+) contacts are provided by residues Met325, Asp344, 401-403, Lys408, and Ser430; that span reads VVE. Residue His451 is the For 3-hydroxyacyl-CoA dehydrogenase activity of the active site. Asn454 contributes to the NAD(+) binding site. Substrate contacts are provided by Asn501 and Tyr660.

This sequence in the N-terminal section; belongs to the enoyl-CoA hydratase/isomerase family. The protein in the C-terminal section; belongs to the 3-hydroxyacyl-CoA dehydrogenase family. Heterotetramer of two alpha chains (FadB) and two beta chains (FadA).

It catalyses the reaction a (3S)-3-hydroxyacyl-CoA + NAD(+) = a 3-oxoacyl-CoA + NADH + H(+). The enzyme catalyses a (3S)-3-hydroxyacyl-CoA = a (2E)-enoyl-CoA + H2O. The catalysed reaction is a 4-saturated-(3S)-3-hydroxyacyl-CoA = a (3E)-enoyl-CoA + H2O. It carries out the reaction (3S)-3-hydroxybutanoyl-CoA = (3R)-3-hydroxybutanoyl-CoA. It catalyses the reaction a (3Z)-enoyl-CoA = a 4-saturated (2E)-enoyl-CoA. The enzyme catalyses a (3E)-enoyl-CoA = a 4-saturated (2E)-enoyl-CoA. The protein operates within lipid metabolism; fatty acid beta-oxidation. Functionally, involved in the aerobic and anaerobic degradation of long-chain fatty acids via beta-oxidation cycle. Catalyzes the formation of 3-oxoacyl-CoA from enoyl-CoA via L-3-hydroxyacyl-CoA. It can also use D-3-hydroxyacyl-CoA and cis-3-enoyl-CoA as substrate. The polypeptide is Fatty acid oxidation complex subunit alpha (Pseudomonas putida (strain ATCC 47054 / DSM 6125 / CFBP 8728 / NCIMB 11950 / KT2440)).